The sequence spans 397 residues: COP9 signalosome complex subunit 4 (397 aa).

M1 is subject to N-acetylmethionine. Residues 197–365 (ALRYYGISQI…AVIHFEDDVE (169 aa)) form the PCI domain.

This sequence belongs to the CSN4 family. In terms of assembly, component of the CSN complex, probably composed of CSN1, CSN2, CSN3, CSN4, CSN5 (CSN5A or CSN5B), CSN6 (CSN6A or CSN6B), CSN7 and CSN8. Interacts with itself. In the complex, it is located in the center and probably interacts directly with CSN1, CSN2, CSN3, CSN4, CSN5A or CSN5B, CSN6A or CSN6B, CSN7 and CSN8. Interacts with COP10. Binds to the translation initiation factors TIF3E1.

It is found in the cytoplasm. The protein resides in the nucleus. Functionally, component of the COP9 signalosome complex (CSN), a complex involved in various cellular and developmental processes such as photomorphogenesis and auxin and jasmonate responses. The CSN complex is an essential regulator of the ubiquitin (Ubl) conjugation pathway by mediating the deneddylation of the cullin subunits of SCF-type E3 ligase complexes, leading to decrease the Ubl ligase activity of SCF. It is involved in repression of photomorphogenesis in darkness by regulating the activity of COP1-containing Ubl ligase complexes. The complex is also required for degradation of IAA6 by regulating the activity of the Ubl ligase SCF-TIR complex. This Arabidopsis thaliana (Mouse-ear cress) protein is COP9 signalosome complex subunit 4 (CSN4).